Consider the following 261-residue polypeptide: WW domain-binding protein 2 (261 aa).

Positions 1 to 84 constitute a GRAM domain; that stretch reads MALNKNHSEG…YLMKDCEIKQ (84 aa). Phosphotyrosine is present on Y192. A PPxY motif 1 motif is present at residues 196–200; the sequence is PPPPY. The span at 196 to 209 shows a compositional bias: pro residues; the sequence is PPPPYPGPMEPPVS. The tract at residues 196–261 is disordered; that stretch reads PPPPYPGPME…YYPPEDKKTQ (66 aa). Over residues 210–230 the composition is skewed to low complexity; the sequence is GPSAPATPAAEAKAAEAAASA. At Y231 the chain carries Phosphotyrosine. Residues 245-254 show a composition bias toward pro residues; sequence SQPPPPPYYP. A PPxY motif 2 motif is present at residues 248 to 252; the sequence is PPPPY.

Binds to the WW domain of YAP1, WWP1 and WWP2. Interacts with NEDD4. Interacts with ESR1 and UBE3A. In terms of processing, phosphorylated in repsonse to EGF as well as estrogen and progesterone hormones. Tyr-192 and Tyr-231 are phosphorylated by YES and SRC inducing nuclear translocation. Expressed in the ear and the eye. Isoform 1 is expressed in brain, inner ear and organ of Corti. Isoform 2 is only detected in brain.

It localises to the cytoplasm. The protein localises to the nucleus. Acts as a transcriptional coactivator of estrogen and progesterone receptors (ESR1 and PGR) upon hormone activation. In presence of estrogen, binds to ESR1-responsive promoters. Synergizes with YAP1 to enhance PGR activity. Modulates expression of post-synaptic scaffolding proteins via regulation of ESR1, ESR2 and PGR. The sequence is that of WW domain-binding protein 2 (Wbp2) from Mus musculus (Mouse).